Consider the following 513-residue polypeptide: GMP synthase [glutamine-hydrolyzing] (513 aa).

A Glutamine amidotransferase type-1 domain is found at Leu-9–Gln-198. The Nucleophile role is filled by Cys-86. Catalysis depends on residues His-172 and Glu-174. A GMPS ATP-PPase domain is found at Trp-199–Arg-388. Residue Ser-226–Ser-232 coordinates ATP.

As to quaternary structure, homodimer.

The catalysed reaction is XMP + L-glutamine + ATP + H2O = GMP + L-glutamate + AMP + diphosphate + 2 H(+). It functions in the pathway purine metabolism; GMP biosynthesis; GMP from XMP (L-Gln route): step 1/1. Its function is as follows. Catalyzes the synthesis of GMP from XMP. This chain is GMP synthase [glutamine-hydrolyzing], found in Staphylococcus aureus (strain Mu3 / ATCC 700698).